The following is an 814-amino-acid chain: Dimethyl sulfoxide reductase DmsA (814 aa).

The tat-type signal signal peptide spans 1 to 45 (MKTKIPDAVLAAEVSRRGLVKTTAIGGLAMASSALTLPFSRIAHA). One can recognise a 4Fe-4S Mo/W bis-MGD-type domain in the interval 56–118 (EKVIWSACTV…SMRRRVYNPD (63 aa)). Residues Cys63, Cys67, Cys71, and Cys104 each contribute to the [4Fe-4S] cluster site. Mo-bis(molybdopterin guanine dinucleotide)-binding positions include 172–176 (LGGTM), Ser205, 244–245 (ET), 270–271 (ID), 291–293 (GTD), 386–387 (WG), Arg390, Asn488, 512–513 (ID), His701, 707–709 (HST), Asn788, and 804–805 (SH).

This sequence belongs to the prokaryotic molybdopterin-containing oxidoreductase family. As to quaternary structure, heterotrimeric enzyme composed of a catalytic heterodimer (DmsAB) and a membrane anchor protein (DmsC). [4Fe-4S] cluster serves as cofactor. The cofactor is Mo-bis(molybdopterin guanine dinucleotide). Post-translationally, exported by the Tat system. The position of the signal peptide cleavage has been experimentally proven. Can also be exported by the Sec system.

The protein resides in the cell membrane. It catalyses the reaction dimethyl sulfide + a menaquinone + H2O = dimethyl sulfoxide + a menaquinol. Its activity is regulated as follows. Inhibited by dithionite, sodium hydrogensulfite and tungstate. Functionally, catalyzes the reduction of dimethyl sulfoxide (DMSO) to dimethyl sulfide (DMS). DMSO reductase serves as the terminal reductase under anaerobic conditions, with DMSO being the terminal electron acceptor. Terminal reductase during anaerobic growth on various sulfoxides and N-oxide compounds. Allows E.coli to grow anaerobically on DMSO as respiratory oxidant. The protein is Dimethyl sulfoxide reductase DmsA (dmsA) of Escherichia coli (strain K12).